The sequence spans 340 residues: Glycerol-3-phosphate dehydrogenase [NAD(P)+] (340 aa).

Residues Ser-14, Phe-15, Arg-35, and Lys-108 each contribute to the NADPH site. Residues Lys-108 and Gly-136 each coordinate sn-glycerol 3-phosphate. Ala-140 contributes to the NADPH binding site. 5 residues coordinate sn-glycerol 3-phosphate: Lys-191, Asp-244, Ser-254, Arg-255, and Asn-256. Catalysis depends on Lys-191, which acts as the Proton acceptor. Residue Arg-255 coordinates NADPH. NADPH contacts are provided by Val-279 and Glu-281.

This sequence belongs to the NAD-dependent glycerol-3-phosphate dehydrogenase family.

Its subcellular location is the cytoplasm. It carries out the reaction sn-glycerol 3-phosphate + NAD(+) = dihydroxyacetone phosphate + NADH + H(+). The enzyme catalyses sn-glycerol 3-phosphate + NADP(+) = dihydroxyacetone phosphate + NADPH + H(+). It participates in membrane lipid metabolism; glycerophospholipid metabolism. Its function is as follows. Catalyzes the reduction of the glycolytic intermediate dihydroxyacetone phosphate (DHAP) to sn-glycerol 3-phosphate (G3P), the key precursor for phospholipid synthesis. The sequence is that of Glycerol-3-phosphate dehydrogenase [NAD(P)+] from Ectopseudomonas mendocina (strain ymp) (Pseudomonas mendocina).